Consider the following 430-residue polypeptide: Adenylosuccinate synthetase (430 aa).

GTP-binding positions include 12-18 (GDEGKGK) and 40-42 (GHT). Asp-13 functions as the Proton acceptor in the catalytic mechanism. Mg(2+) is bound by residues Asp-13 and Gly-40. IMP contacts are provided by residues 13–16 (DEGK), 38–41 (NAGH), Thr-128, Arg-142, Gln-223, Thr-238, and Arg-302. The Proton donor role is filled by His-41. 298-304 (TTTGRPR) contributes to the substrate binding site. GTP-binding positions include Arg-304, 330–332 (SID), and 412–414 (SVG).

It belongs to the adenylosuccinate synthetase family. In terms of assembly, homodimer. Mg(2+) serves as cofactor.

The protein resides in the cytoplasm. The catalysed reaction is IMP + L-aspartate + GTP = N(6)-(1,2-dicarboxyethyl)-AMP + GDP + phosphate + 2 H(+). It functions in the pathway purine metabolism; AMP biosynthesis via de novo pathway; AMP from IMP: step 1/2. In terms of biological role, plays an important role in the de novo pathway of purine nucleotide biosynthesis. Catalyzes the first committed step in the biosynthesis of AMP from IMP. The protein is Adenylosuccinate synthetase of Enterococcus faecalis (strain ATCC 700802 / V583).